Here is a 150-residue protein sequence, read N- to C-terminus: 1,4-dihydroxy-2-naphthoyl-CoA hydrolase (150 aa).

D19 is a catalytic residue.

Belongs to the 4-hydroxybenzoyl-CoA thioesterase family. DHNA-CoA hydrolase subfamily.

The enzyme catalyses 1,4-dihydroxy-2-naphthoyl-CoA + H2O = 1,4-dihydroxy-2-naphthoate + CoA + H(+). Its pathway is cofactor biosynthesis; phylloquinone biosynthesis. The protein operates within quinol/quinone metabolism; 1,4-dihydroxy-2-naphthoate biosynthesis; 1,4-dihydroxy-2-naphthoate from chorismate: step 7/7. Catalyzes the hydrolysis of 1,4-dihydroxy-2-naphthoyl-CoA (DHNA-CoA) to 1,4-dihydroxy-2-naphthoate (DHNA), a reaction involved in phylloquinone (vitamin K1) biosynthesis. The protein is 1,4-dihydroxy-2-naphthoyl-CoA hydrolase of Prochlorococcus marinus (strain MIT 9312).